Consider the following 130-residue polypeptide: Small ribosomal subunit protein uS11 (130 aa).

Belongs to the universal ribosomal protein uS11 family. In terms of assembly, part of the 30S ribosomal subunit. Interacts with proteins S7 and S18. Binds to IF-3.

Functionally, located on the platform of the 30S subunit, it bridges several disparate RNA helices of the 16S rRNA. Forms part of the Shine-Dalgarno cleft in the 70S ribosome. In Thermotoga petrophila (strain ATCC BAA-488 / DSM 13995 / JCM 10881 / RKU-1), this protein is Small ribosomal subunit protein uS11.